A 647-amino-acid polypeptide reads, in one-letter code: Phosphomethylpyrimidine synthase (647 aa).

Substrate-binding positions include Asn-235, Met-264, Tyr-293, His-329, 349–351 (SRG), 390–393 (DGLR), and Glu-429. His-433 is a binding site for Zn(2+). Tyr-456 is a binding site for substrate. His-497 is a binding site for Zn(2+). [4Fe-4S] cluster-binding residues include Cys-577, Cys-580, and Cys-585. The interval 623–647 (KSAEFKASGSELYHPAVSHEEVAEG) is disordered.

It belongs to the ThiC family. As to quaternary structure, homodimer. The cofactor is [4Fe-4S] cluster.

The catalysed reaction is 5-amino-1-(5-phospho-beta-D-ribosyl)imidazole + S-adenosyl-L-methionine = 4-amino-2-methyl-5-(phosphooxymethyl)pyrimidine + CO + 5'-deoxyadenosine + formate + L-methionine + 3 H(+). The protein operates within cofactor biosynthesis; thiamine diphosphate biosynthesis. Its function is as follows. Catalyzes the synthesis of the hydroxymethylpyrimidine phosphate (HMP-P) moiety of thiamine from aminoimidazole ribotide (AIR) in a radical S-adenosyl-L-methionine (SAM)-dependent reaction. The polypeptide is Phosphomethylpyrimidine synthase (Vibrio vulnificus (strain CMCP6)).